The following is a 252-amino-acid chain: Thiazole synthase (252 aa).

Catalysis depends on lysine 91, which acts as the Schiff-base intermediate with DXP. Residues glycine 152, 179-180 (AG), and 201-202 (NT) each bind 1-deoxy-D-xylulose 5-phosphate.

Belongs to the ThiG family. In terms of assembly, homotetramer. Forms heterodimers with either ThiH or ThiS.

It localises to the cytoplasm. It carries out the reaction [ThiS sulfur-carrier protein]-C-terminal-Gly-aminoethanethioate + 2-iminoacetate + 1-deoxy-D-xylulose 5-phosphate = [ThiS sulfur-carrier protein]-C-terminal Gly-Gly + 2-[(2R,5Z)-2-carboxy-4-methylthiazol-5(2H)-ylidene]ethyl phosphate + 2 H2O + H(+). It functions in the pathway cofactor biosynthesis; thiamine diphosphate biosynthesis. Catalyzes the rearrangement of 1-deoxy-D-xylulose 5-phosphate (DXP) to produce the thiazole phosphate moiety of thiamine. Sulfur is provided by the thiocarboxylate moiety of the carrier protein ThiS. In vitro, sulfur can be provided by H(2)S. This chain is Thiazole synthase, found in Erwinia pyrifoliae (strain DSM 12162 / Ep1/96).